We begin with the raw amino-acid sequence, 366 residues long: Flagellar P-ring protein (366 aa).

The N-terminal stretch at 1–22 (MFTRKSVILMAVLLIWSAVSYA) is a signal peptide.

Belongs to the FlgI family. As to quaternary structure, the basal body constitutes a major portion of the flagellar organelle and consists of four rings (L,P,S, and M) mounted on a central rod.

It is found in the periplasm. It localises to the bacterial flagellum basal body. Functionally, assembles around the rod to form the L-ring and probably protects the motor/basal body from shearing forces during rotation. This Hydrogenovibrio crunogenus (strain DSM 25203 / XCL-2) (Thiomicrospira crunogena) protein is Flagellar P-ring protein.